A 545-amino-acid polypeptide reads, in one-letter code: Pentatricopeptide repeat-containing protein At4g18840 (545 aa).

PPR repeat units follow at residues 104–138, 139–173, 174–204, 205–239, 240–266, 267–301, 303–337, 338–368, 369–403, 404–434, and 440–474; these read NGFT…PVFP, DKYS…GLVT, DVFV…MPVR, DAVS…NVES, WNFM…MPVR, DVVS…STEK, DGFT…GIEI, EGFL…TSKR, DVST…GFKP, NGIT…MSSV, and TIEH…EASI. The interval 475–545 is type E motif; sequence LLESLLGACK…ERVNRSLDVA (71 aa).

It belongs to the PPR family. PCMP-E subfamily.

The chain is Pentatricopeptide repeat-containing protein At4g18840 (PCMP-E101) from Arabidopsis thaliana (Mouse-ear cress).